A 289-amino-acid polypeptide reads, in one-letter code: 4-hydroxybenzoate octaprenyltransferase (289 aa).

A run of 9 helical transmembrane segments spans residues 19 to 39 (IPIL…SHGL), 42 to 62 (ISYL…GCII), 85 to 105 (GQLS…VAFI), 107 to 127 (VLFL…LAIL), 134 to 154 (FFAI…FMAF), 165 to 185 (AWIF…IYAL), 211 to 231 (ILLF…YCDF), 233 to 253 (SFFY…YFLY), and 265 to 285 (FSAN…QYII).

This sequence belongs to the UbiA prenyltransferase family. The cofactor is Mg(2+).

Its subcellular location is the cell inner membrane. The enzyme catalyses all-trans-octaprenyl diphosphate + 4-hydroxybenzoate = 4-hydroxy-3-(all-trans-octaprenyl)benzoate + diphosphate. Its pathway is cofactor biosynthesis; ubiquinone biosynthesis. Its function is as follows. Catalyzes the prenylation of para-hydroxybenzoate (PHB) with an all-trans polyprenyl group. Mediates the second step in the final reaction sequence of ubiquinone-8 (UQ-8) biosynthesis, which is the condensation of the polyisoprenoid side chain with PHB, generating the first membrane-bound Q intermediate 3-octaprenyl-4-hydroxybenzoate. In Francisella tularensis subsp. holarctica (strain FTNF002-00 / FTA), this protein is 4-hydroxybenzoate octaprenyltransferase.